Reading from the N-terminus, the 794-residue chain is MKFKYGAIVFSGLLGVSAILAACGARGKFNQVDDGKIKLASSLTSRSASTALQKVVEKYNKVKGVNDYPIEITQIAGGYDGGRTDLQTRVNVKDTTNFYNLILNYPDLVSTLGRVGMELPFDKVKTDKLADRFLDFNNRISAISKKGIYGIPVSLSTEVLSINGPVLHYILNSAQGKVSSVTSVQRTADSGSGTTNNNGVTKPLKIDKENESTKKLWEEIENKAKENGKKTSSSRRKRNLSSSKQMSTQTQPTDNSNDANQSDQAIEKTWGKYQEVEGGLKDYTFKASVFENWHDLLDFSNRVAKSFSNINTNTNKKGTDIQGVLGIDSTPNSLFTSVFAAGGGNYDNFFYKVANGRADFSNFKNKGTSYQNLQKVYGDYKGLIDSNGLFVNKGGSYSSNFQKFHQLAYSISSTSGFFYSFAGENSKRLKFDGGNFIEFPGFTQAIYAPENNSQSGGESGDQTTNNEANLLGTFKIKSSNKSKSSSSKSSTKAETGKTSGGDQNQGKKGEGAQNQGKKGEGAQNQGKNGGVETTIYLYKNSIPSGKNKGENAILIDNKTIVEQLESAAKKEDKKSGESTTEQTQIQSKSVTEQKQPKIIGYTTTGNVHEDNKHIFPIDKLTSDRNFDRKIIVGATEETLDKSNTLQSNEAIVLPAPSKYKSTDTNKVTITQGPNIIGIHVNEKENAETQKFVDWFLNSPQTWEGKGKGKEQTNKTAAEFFAESASYILPLKEIFEQKNEKKEGSDQKDSKSNGRGKQTNLYTEKALELFRGISTDQIVSYSDQVTLGVVVSVME.

An N-terminal signal peptide occupies residues 1-22 (MKFKYGAIVFSGLLGVSAILAA). Cysteine 23 carries the N-palmitoyl cysteine lipid modification. Residue cysteine 23 is the site of S-diacylglycerol cysteine attachment. 2 stretches are compositionally biased toward polar residues: residues 182–200 (TSVQRTADSGSGTTNNNGV) and 245–261 (QMSTQTQPTDNSNDANQ). Disordered regions lie at residues 182 to 208 (TSVQRTADSGSGTTNNNGVTKPLKIDK), 222 to 261 (NKAKENGKKTSSSRRKRNLSSSKQMSTQTQPTDNSNDANQ), 474 to 529 (FKIK…GKNG), 566 to 594 (SAAKKEDKKSGESTTEQTQIQSKSVTEQK), and 737 to 757 (KNEKKEGSDQKDSKSNGRGKQ). Positions 475-501 (KIKSSNKSKSSSSKSSTKAETGKTSGG) are enriched in low complexity. Positions 511–526 (GAQNQGKKGEGAQNQG) are enriched in polar residues. The segment covering 567 to 576 (AAKKEDKKSG) has biased composition (basic and acidic residues). Residues 577–593 (ESTTEQTQIQSKSVTEQ) show a composition bias toward polar residues. Residues 737–751 (KNEKKEGSDQKDSKS) are compositionally biased toward basic and acidic residues.

Belongs to the MG185/MG260 family.

The protein localises to the cell membrane. This is an uncharacterized protein from Mycoplasma pneumoniae (strain ATCC 29342 / M129 / Subtype 1) (Mycoplasmoides pneumoniae).